The sequence spans 269 residues: tRNA pseudouridine synthase A (269 aa).

Asp51 functions as the Nucleophile in the catalytic mechanism. Tyr109 contacts substrate.

Belongs to the tRNA pseudouridine synthase TruA family. Homodimer.

The catalysed reaction is uridine(38/39/40) in tRNA = pseudouridine(38/39/40) in tRNA. Functionally, formation of pseudouridine at positions 38, 39 and 40 in the anticodon stem and loop of transfer RNAs. This is tRNA pseudouridine synthase A from Haemophilus influenzae (strain ATCC 51907 / DSM 11121 / KW20 / Rd).